The sequence spans 1275 residues: Inner capsid protein lambda-1 (1275 aa).

Over residues 1–12 (MKRIPRKTRGKS) the composition is skewed to basic residues. Residues 1 to 147 (MKRIPRKTRG…NVDNEGGDNQ (147 aa)) are disordered. Residues 18-35 (DSTERADDGSAQLRDKQS) show a composition bias toward basic and acidic residues. Residues 55-66 (TRPSLQTVQKAT) are compositionally biased toward polar residues. Basic and acidic residues-rich tracts occupy residues 80–98 (AVDKKGNTKGDKTNEHVEA) and 105–117 (ATKRQAKDTDKQK). Residues 118 to 139 (AQVTYNDTGINNANELSRSGNV) show a composition bias toward polar residues. The segment at 181–203 (YQCHVCSAVLFSPLDLDAHVASH) adopts a C2H2-type zinc-finger fold.

This sequence belongs to the turreted BTV-fold inner capsid family. In terms of assembly, homodecamer; each decamer is made up of two conformers of VP2, called VP2A and VP2B. 12 homodecamers assemble to form an icosahedral capsid. Interacts with protein mu-NS; in viral inclusions. Mg(2+) is required as a cofactor. Mn(2+) serves as cofactor.

The protein localises to the virion. It catalyses the reaction ATP + H2O = ADP + phosphate + H(+). Inner capsid protein that self-assembles to form an icosahedral capsid with a T=2 symmetry, which consists of 120 copies of VP2, with channels at each of its five-fold vertices. This capsid constitutes the innermost concentric layer of the viral mature particle. Its function is as follows. Displays NTPase, RNA 5'-triphosphatase (RTPase) and RNA helicase activities and probably participates in transcription of the viral genome. Helicase activity might be involved in unwinding or reannealing dsRNA during RNA synthesis. RTPase enzymatic activity represents the first step in RNA capping, which yields a 5'-diphosphorylated plus-strand RNA. The chain is Inner capsid protein lambda-1 from Reovirus type 2 (strain D5/Jones) (T2J).